We begin with the raw amino-acid sequence, 355 residues long: S-adenosylmethionine:tRNA ribosyltransferase-isomerase (355 aa).

The protein belongs to the QueA family. Monomer.

It is found in the cytoplasm. The catalysed reaction is 7-aminomethyl-7-carbaguanosine(34) in tRNA + S-adenosyl-L-methionine = epoxyqueuosine(34) in tRNA + adenine + L-methionine + 2 H(+). It functions in the pathway tRNA modification; tRNA-queuosine biosynthesis. In terms of biological role, transfers and isomerizes the ribose moiety from AdoMet to the 7-aminomethyl group of 7-deazaguanine (preQ1-tRNA) to give epoxyqueuosine (oQ-tRNA). In Aeromonas hydrophila subsp. hydrophila (strain ATCC 7966 / DSM 30187 / BCRC 13018 / CCUG 14551 / JCM 1027 / KCTC 2358 / NCIMB 9240 / NCTC 8049), this protein is S-adenosylmethionine:tRNA ribosyltransferase-isomerase.